A 255-amino-acid chain; its full sequence is tRNA (guanine-N(1)-)-methyltransferase (255 aa).

S-adenosyl-L-methionine-binding positions include G114 and 134–139 (IGDYIL).

This sequence belongs to the RNA methyltransferase TrmD family. Homodimer.

It is found in the cytoplasm. The catalysed reaction is guanosine(37) in tRNA + S-adenosyl-L-methionine = N(1)-methylguanosine(37) in tRNA + S-adenosyl-L-homocysteine + H(+). Specifically methylates guanosine-37 in various tRNAs. The sequence is that of tRNA (guanine-N(1)-)-methyltransferase from Blochmanniella pennsylvanica (strain BPEN).